Consider the following 488-residue polypeptide: N-succinylglutamate 5-semialdehyde dehydrogenase 2 (488 aa).

221–226 (GSSNTG) is a binding site for NAD(+). Active-site residues include glutamate 244 and cysteine 278.

Belongs to the aldehyde dehydrogenase family. AstD subfamily.

The catalysed reaction is N-succinyl-L-glutamate 5-semialdehyde + NAD(+) + H2O = N-succinyl-L-glutamate + NADH + 2 H(+). It participates in amino-acid degradation; L-arginine degradation via AST pathway; L-glutamate and succinate from L-arginine: step 4/5. In terms of biological role, catalyzes the NAD-dependent reduction of succinylglutamate semialdehyde into succinylglutamate. The polypeptide is N-succinylglutamate 5-semialdehyde dehydrogenase 2 (Pseudoalteromonas translucida (strain TAC 125)).